A 151-amino-acid polypeptide reads, in one-letter code: Multiprotein-bridging factor 1 (151 aa).

Disordered stretches follow at residues 1–29 (MSDW…ARSQ) and 78–98 (DPNV…SQKD). Positions 41 to 119 (VVSVDKKYGS…VNDYEAARAI (79 aa)) are essential for TBP-binding. One can recognise an HTH cro/C1-type domain in the interval 85–139 (ISRARTDKKMSQKDLATKINEKPTVVNDYEAARAIPNQQVLSKLERALGVKLRGN). Basic and acidic residues predominate over residues 88–98 (ARTDKKMSQKD). The H-T-H motif DNA-binding region spans 96–115 (QKDLATKINEKPTVVNDYEA). At S143 the chain carries Phosphoserine.

Belongs to the MBF1 family. In terms of assembly, interacts with TBP and the transcription factor GCN4. Interacts with RPS3/us3.

Its subcellular location is the cytoplasm. It localises to the nucleus. Transcriptional coactivator that stimulates GCN4-dependent transcriptional activity by bridging the DNA-binding region of GCN4 and TBP (SPT15), thereby recruiting TBP to GCN4-bound promoters. Involved in induction of the ribosome quality control (RQC) pathway; a pathway that degrades nascent peptide chains during problematic translation. Required to prevent stalled ribosomes from frameshifting. The protein is Multiprotein-bridging factor 1 (MBF1) of Saccharomyces cerevisiae (strain ATCC 204508 / S288c) (Baker's yeast).